The sequence spans 60 residues: Putative SERF-like protein (60 aa).

A compositionally biased stretch (basic and acidic residues) spans 1 to 53 (MTRGNQRDLARQKNQKKQADLTKGKRTDNLTVEQRKARDAELMREKQKKKEEA). Positions 1–60 (MTRGNQRDLARQKNQKKQADLTKGKRTDNLTVEQRKARDAELMREKQKKKEEAAAAGTSK) are disordered.

It belongs to the SERF family.

This is Putative SERF-like protein from Drosophila melanogaster (Fruit fly).